The chain runs to 148 residues: Large ribosomal subunit protein bL9 (148 aa).

This sequence belongs to the bacterial ribosomal protein bL9 family.

In terms of biological role, binds to the 23S rRNA. The protein is Large ribosomal subunit protein bL9 of Listeria innocua serovar 6a (strain ATCC BAA-680 / CLIP 11262).